Consider the following 207-residue polypeptide: tRNA (pseudouridine(54)-N(1))-methyltransferase (207 aa).

Residue Leu137 participates in S-adenosyl-L-methionine binding.

Belongs to the methyltransferase superfamily. TrmY family. In terms of assembly, homodimer.

The protein resides in the cytoplasm. It catalyses the reaction pseudouridine(54) in tRNA + S-adenosyl-L-methionine = N(1)-methylpseudouridine(54) in tRNA + S-adenosyl-L-homocysteine + H(+). In terms of biological role, specifically catalyzes the N1-methylation of pseudouridine at position 54 (Psi54) in tRNAs. This chain is tRNA (pseudouridine(54)-N(1))-methyltransferase, found in Halorubrum lacusprofundi (strain ATCC 49239 / DSM 5036 / JCM 8891 / ACAM 34).